Consider the following 254-residue polypeptide: 5-oxoprolinase subunit A (254 aa).

This sequence belongs to the LamB/PxpA family. Forms a complex composed of PxpA, PxpB and PxpC.

The enzyme catalyses 5-oxo-L-proline + ATP + 2 H2O = L-glutamate + ADP + phosphate + H(+). Catalyzes the cleavage of 5-oxoproline to form L-glutamate coupled to the hydrolysis of ATP to ADP and inorganic phosphate. This chain is 5-oxoprolinase subunit A, found in Acinetobacter baumannii (strain ACICU).